Here is a 1097-residue protein sequence, read N- to C-terminus: DNA-directed RNA polymerase subunit beta (1097 aa).

This sequence belongs to the RNA polymerase beta chain family. As to quaternary structure, in plastids the minimal PEP RNA polymerase catalytic core is composed of four subunits: alpha, beta, beta', and beta''. When a (nuclear-encoded) sigma factor is associated with the core the holoenzyme is formed, which can initiate transcription.

It localises to the plastid. Its subcellular location is the chloroplast. The enzyme catalyses RNA(n) + a ribonucleoside 5'-triphosphate = RNA(n+1) + diphosphate. Its function is as follows. DNA-dependent RNA polymerase catalyzes the transcription of DNA into RNA using the four ribonucleoside triphosphates as substrates. This Rhodomonas salina (Cryptomonas salina) protein is DNA-directed RNA polymerase subunit beta.